A 330-amino-acid polypeptide reads, in one-letter code: Aquaporin-3 (330 aa).

The Cytoplasmic segment spans residues 1 to 40 (MSATPIIHLRDVKKRTGVLNAWERVRNKPQVHWAMECFAE). The chain crosses the membrane as a helical span at residues 41 to 61 (ALGVFFYVYFGLGSTAAWVIG). The Extracellular portion of the chain corresponds to 62–71 (NILKQSGLSS). A helical transmembrane segment spans residues 72-92 (VFQIGFAYAFGILFAIGVCAA). At 93-124 (TSGGHFNPCVTIAFTIFRGFPPLKAVRYIVAQ) the chain is on the cytoplasmic side. The NPA 1 signature appears at 99–101 (NPC). Residues 125-145 (ILGAYIASALVYNQWKVLIVE) form a helical membrane-spanning segment. Over 146-157 (SELLLKQAGVYE) the chain is Extracellular. The helical transmembrane segment at 158–178 (TTMFTPNGPAGIFALYLLPGA) threads the bilayer. The Cytoplasmic portion of the chain corresponds to 179-183 (QTLPR). The chain crosses the membrane as a helical span at residues 184–204 (AFLNEFVNCFVLALVIWAALD). Residues 205–207 (PTS) lie on the Extracellular side of the membrane. Residues 208 to 228 (FMIPPVMAPFIIAAAYAGSIW) form a helical membrane-spanning segment. At 229–264 (GYAVPAISLNSARDIGCRLFALTIWGKSAAGGSYSA) the chain is on the cytoplasmic side. Positions 238–240 (NSA) match the NPA 2 motif. A helical transmembrane segment spans residues 265 to 285 (IAALVNIPATLLAAVVYELFL). The Extracellular portion of the chain corresponds to 286-330 (VDSDRVVAGSHLEFMNVAANHRRHRQQAEDDNLVEADDSSQEKPV). The interval 308-330 (RHRQQAEDDNLVEADDSSQEKPV) is disordered. Over residues 314–324 (EDDNLVEADDS) the composition is skewed to acidic residues.

This sequence belongs to the MIP/aquaporin (TC 1.A.8) family.

It localises to the cell membrane. It catalyses the reaction H2O(in) = H2O(out). The enzyme catalyses CO2(out) = CO2(in). In terms of biological role, water channel required to facilitate the transport of water across membranes. Also mediates the transport of carbon dioxide across the membrane. The protein is Aquaporin-3 of Laccaria bicolor (Bicoloured deceiver).